The chain runs to 316 residues: UDP-N-acetylglucosamine transporter yea4 (316 aa).

Over 1 to 3 (MIA) the chain is Cytoplasmic. A helical membrane pass occupies residues 4–24 (SALSFIFGGCCSNAYALEALV). The Lumenal portion of the chain corresponds to 25 to 31 (REFPSSG). The helical transmembrane segment at 32 to 52 (ILITFSQFILITIEGLIYFLL) threads the bilayer. At 53 to 67 (NDVQSLKHPKVPRKR) the chain is on the cytoplasmic side. Residues 68-88 (WFVVVVMFFAINVLNNVALGF) traverse the membrane as a helical segment. Residues 89 to 120 (DISVPVHIILRSSGPLTTMAVGRILAGKRYSS) lie on the Lumenal side of the membrane. Residues 121-141 (LQIGSVFILTIGVIIATLGNA) traverse the membrane as a helical segment. The Cytoplasmic portion of the chain corresponds to 142 to 153 (KDLHLHVESMTR). Residues 154 to 174 (FGIGFTILVITQILGAIMGLV) form a helical membrane-spanning segment. The Lumenal segment spans residues 175 to 187 (LENTYRIYGSDWR). Residues 188–208 (ESLFYTHALSLPFFLFLLRPI) form a helical membrane-spanning segment. The Cytoplasmic segment spans residues 209–214 (RSQWND). A helical transmembrane segment spans residues 215–235 (LFAIHTKGFLNLPSGVWYLCF). At 236–274 (NTLAQYFCVRGVNALGAETSALTVSVVLNVRKFVSLCLS) the chain is on the lumenal side. The chain crosses the membrane as a helical span at residues 275 to 295 (LILFENEMGPAVKFGALLVFG). Residues 296–316 (SSAVYASARSKPKTNGLKKND) are Cytoplasmic-facing.

Belongs to the nucleotide-sugar transporter family. SLC35B subfamily.

Its subcellular location is the endoplasmic reticulum. The protein localises to the endoplasmic reticulum membrane. Sugar transporter that specifically mediates the transport of UDP-N-acetylglucosamine (UDP-GlcNAc) and is required for cell wall chitin synthesis. The polypeptide is UDP-N-acetylglucosamine transporter yea4 (yea4) (Schizosaccharomyces pombe (strain 972 / ATCC 24843) (Fission yeast)).